Reading from the N-terminus, the 257-residue chain is Glutamate racemase (257 aa).

Residues 12-13 (DS) and 44-45 (YG) each bind substrate. Catalysis depends on C75, which acts as the Proton donor/acceptor. 76–77 (NT) contributes to the substrate binding site. Catalysis depends on C185, which acts as the Proton donor/acceptor. Residue 186-187 (TH) participates in substrate binding.

This sequence belongs to the aspartate/glutamate racemases family.

The catalysed reaction is L-glutamate = D-glutamate. The protein operates within cell wall biogenesis; peptidoglycan biosynthesis. Provides the (R)-glutamate required for cell wall biosynthesis. The protein is Glutamate racemase of Clostridium botulinum (strain Loch Maree / Type A3).